Reading from the N-terminus, the 297-residue chain is Pyridoxal 5'-phosphate synthase subunit Pdx1 (297 aa).

Asp27 provides a ligand contact to D-ribose 5-phosphate. The active-site Schiff-base intermediate with D-ribose 5-phosphate is Lys84. A D-ribose 5-phosphate-binding site is contributed by Gly156. Arg168 provides a ligand contact to D-glyceraldehyde 3-phosphate. D-ribose 5-phosphate contacts are provided by residues Gly217 and Gly238–Ser239.

Belongs to the PdxS/SNZ family. Homohexamer and homododecamer. In the presence of Pdx2, forms a dodecamer of heterodimers.

The catalysed reaction is aldehydo-D-ribose 5-phosphate + D-glyceraldehyde 3-phosphate + L-glutamine = pyridoxal 5'-phosphate + L-glutamate + phosphate + 3 H2O + H(+). Its pathway is cofactor biosynthesis; pyridoxal 5'-phosphate biosynthesis. In terms of biological role, catalyzes the formation of pyridoxal 5'-phosphate from ribose 5-phosphate (RBP), glyceraldehyde 3-phosphate (G3P) and ammonia. The ammonia is provided by Pdx2. Can also use ribulose 5-phosphate and dihydroxyacetone phosphate as substrates, resulting from enzyme-catalyzed isomerization of RBP and G3P, respectively. The polypeptide is Pyridoxal 5'-phosphate synthase subunit Pdx1 (Plasmodium berghei).